A 301-amino-acid polypeptide reads, in one-letter code: MSSLPPFVTTLDLKLAEKLLKDLQQQGFSITIPAYTRFSASKKGLTCTLYTSGKLVVQGKEQAHFIEFYLEPEILESFGFSHPTTKIDLTPHIGIDESGKGDFFGPLCIAGVYIQANQFSKLQALGVKDSKTLSDKTIRQLASQIKNLCLYHIVKINPAKYNEIYQDFKNLNHLLAWGHATTIEQLILQSGCQTVIVDQFADEKVVLLALKRKKLDVNLTQRHRAEDDLAVAAASILARQAFIDGLEQLSKEIQIPLPKGSSSATQKAGKEVLRKWGEERLRSICKQHFKTLDAILGKVGK.

One can recognise an RNase H type-2 domain in the interval 90–301; the sequence is TPHIGIDESG…LDAILGKVGK (212 aa). The a divalent metal cation site is built by Asp96, Glu97, and Asp198.

The protein belongs to the RNase HII family. RnhC subfamily. The cofactor is Mn(2+). It depends on Mg(2+) as a cofactor.

It is found in the cytoplasm. The enzyme catalyses Endonucleolytic cleavage to 5'-phosphomonoester.. Its function is as follows. Endonuclease that specifically degrades the RNA of RNA-DNA hybrids. The protein is Ribonuclease HIII of Protochlamydia amoebophila (strain UWE25).